A 312-amino-acid polypeptide reads, in one-letter code: Olfactory receptor-like protein COR6 (312 aa).

Topologically, residues 1 to 26 are extracellular; it reads MASGNCTTPTTFILSGLTDNPGLQMP. The N-linked (GlcNAc...) asparagine glycan is linked to asparagine 5. A helical transmembrane segment spans residues 27–49; sequence LFMVFLAIYTITLLTNLGLIALI. Over 50 to 57 the chain is Cytoplasmic; it reads SIDLQLQT. The helical transmembrane segment at 58–79 threads the bilayer; the sequence is PMYIFLQNLSFTDAVYSTVITP. Residues 80 to 100 are Extracellular-facing; sequence KMLATFLEETKTISYVGCILQ. Cysteines 97 and 179 form a disulfide. A helical membrane pass occupies residues 101–120; that stretch reads YFSFVLLTVRECLLLAVMAY. The Cytoplasmic portion of the chain corresponds to 121–139; the sequence is DRYAAICKPLLYPAIMTKA. Residues 140 to 164 form a helical membrane-spanning segment; it reads VCWRLVKGLYSLAFLNFLVHTSGLL. Topologically, residues 165-205 are extracellular; that stretch reads KLSFCSSNVVNHFFCDNSPLFQISSSSTALNELLVFIFGSL. Residues 206–226 traverse the membrane as a helical segment; sequence FVMSSIITILISYVFIILTVV. The Cytoplasmic segment spans residues 227–239; that stretch reads RIRSKERKYKAFS. The chain crosses the membrane as a helical span at residues 240–260; that stretch reads TCTSHLMAVSLFHGTIVFMYF. Residues 261 to 271 are Extracellular-facing; the sequence is QPANNFSLDKD. Residues 272-292 form a helical membrane-spanning segment; that stretch reads KIMSLFYTVVIPMLNPLIYSW. At 293–312 the chain is on the cytoplasmic side; that stretch reads RNKEVKDALHRAIATAVLFH.

It belongs to the G-protein coupled receptor 1 family.

The protein resides in the cell membrane. In terms of biological role, odorant receptor. The sequence is that of Olfactory receptor-like protein COR6 (COR6) from Gallus gallus (Chicken).